We begin with the raw amino-acid sequence, 582 residues long: External alternative NAD(P)H-ubiquinone oxidoreductase B4, mitochondrial (582 aa).

A mitochondrion-targeting transit peptide spans 1 to 39; the sequence is MSFHSFYQRASSLFKAYPSTSKILLLSTFSGGGGVLVYS. An FAD-binding site is contributed by 65-95; it reads KVVVLGSGWSGYSFLSYLNNPNYDVQVVSPR. NAD(+) is bound at residue 227-263; the sequence is LHFVVVGGGPTGVEFSAELHDFLVQDVAKIYPKVQEF. The EF-hand domain occupies 384–419; the sequence is RVMEDIAAIFNKADKGNTGTLKKKDFNSVVKDICQR. Ca(2+) is bound by residues aspartate 397, threonine 401, threonine 403, and aspartate 408. The Microbody targeting signal signature appears at 573 to 582; the sequence is FVFGRDSSSI.

Belongs to the NADH dehydrogenase family. Requires FAD as cofactor. Expressed in seedlings, roots, cotyledons, stems, buds and flowers and, to a lower extent, in stems and leaves.

It is found in the mitochondrion inner membrane. Its subcellular location is the peroxisome. The catalysed reaction is a quinone + NADH + H(+) = a quinol + NAD(+). It carries out the reaction a ubiquinone + NADH + H(+) = a ubiquinol + NAD(+). Its activity is regulated as follows. No effect of calcium ions on activity. In terms of biological role, alternative NADH-ubiquinone oxidoreductase which catalyzes the oxidation of mitochondrial NADH does not translocate protons across the inner mitochondrial membrane. NAD(P)H dehydrogenase; more efficient on NADH. This Arabidopsis thaliana (Mouse-ear cress) protein is External alternative NAD(P)H-ubiquinone oxidoreductase B4, mitochondrial (NDB4).